The chain runs to 251 residues: Triosephosphate isomerase (251 aa).

9-11 lines the substrate pocket; it reads NWK. The Electrophile role is filled by His-94. The active-site Proton acceptor is the Glu-166. Substrate is bound by residues Gly-172, Ser-211, and 232–233; that span reads GG.

It belongs to the triosephosphate isomerase family. In terms of assembly, homodimer.

Its subcellular location is the cytoplasm. It catalyses the reaction D-glyceraldehyde 3-phosphate = dihydroxyacetone phosphate. Its pathway is carbohydrate biosynthesis; gluconeogenesis. It functions in the pathway carbohydrate degradation; glycolysis; D-glyceraldehyde 3-phosphate from glycerone phosphate: step 1/1. Its function is as follows. Involved in the gluconeogenesis. Catalyzes stereospecifically the conversion of dihydroxyacetone phosphate (DHAP) to D-glyceraldehyde-3-phosphate (G3P). In Stenotrophomonas maltophilia (strain R551-3), this protein is Triosephosphate isomerase.